The chain runs to 539 residues: Probable K(+)/H(+) antiporter subunit D (539 aa).

Transmembrane regions (helical) follow at residues 4–23, 36–58, 78–100, 113–135, 140–162, 175–197, 217–239, 251–273, 283–305, 312–331, 335–357, 400–422, 442–464, and 484–506; these read WLDH…AAVL, AIGF…LAAA, FGIV…GLAL, AGHH…FLTG, LFVF…SGPL, LAAS…TLNM, MGSA…SFWL, AGVF…LLVF, FGQE…GVLA, LAGY…VGLG, MLAG…FLLI, VLGL…SGFI, AMSA…AMIA, and VVVI…SLQA.

Belongs to the CPA3 antiporters (TC 2.A.63) subunit D family. May form a hetero-oligomeric complex that consists of six subunits: PhaAB, PhaC, PhaD, PhaE, PhaF and PhaG.

Its subcellular location is the cell membrane. Its function is as follows. Part of a K(+) efflux system which is required for the adaptation of R.meliloti to alkaline pH as well as for the infection process during symbiotic nodule development. This chain is Probable K(+)/H(+) antiporter subunit D (phaD), found in Rhizobium meliloti (strain 1021) (Ensifer meliloti).